Consider the following 252-residue polypeptide: Imidazole glycerol phosphate synthase subunit HisF (252 aa).

Catalysis depends on residues Asp-11 and Asp-130.

Belongs to the HisA/HisF family. In terms of assembly, heterodimer of HisH and HisF.

The protein localises to the cytoplasm. The enzyme catalyses 5-[(5-phospho-1-deoxy-D-ribulos-1-ylimino)methylamino]-1-(5-phospho-beta-D-ribosyl)imidazole-4-carboxamide + L-glutamine = D-erythro-1-(imidazol-4-yl)glycerol 3-phosphate + 5-amino-1-(5-phospho-beta-D-ribosyl)imidazole-4-carboxamide + L-glutamate + H(+). It participates in amino-acid biosynthesis; L-histidine biosynthesis; L-histidine from 5-phospho-alpha-D-ribose 1-diphosphate: step 5/9. In terms of biological role, IGPS catalyzes the conversion of PRFAR and glutamine to IGP, AICAR and glutamate. The HisF subunit catalyzes the cyclization activity that produces IGP and AICAR from PRFAR using the ammonia provided by the HisH subunit. The chain is Imidazole glycerol phosphate synthase subunit HisF from Thermococcus gammatolerans (strain DSM 15229 / JCM 11827 / EJ3).